Consider the following 140-residue polypeptide: Large ribosomal subunit protein uL14 (140 aa).

Belongs to the universal ribosomal protein uL14 family. As to quaternary structure, part of the 50S ribosomal subunit. Forms a cluster with proteins L3 and L24e, part of which may contact the 16S rRNA in 2 intersubunit bridges.

Its function is as follows. Binds to 23S rRNA. Forms part of two intersubunit bridges in the 70S ribosome. The polypeptide is Large ribosomal subunit protein uL14 (Aeropyrum pernix (strain ATCC 700893 / DSM 11879 / JCM 9820 / NBRC 100138 / K1)).